Consider the following 455-residue polypeptide: Chromosomal replication initiator protein DnaA (455 aa).

Residues 1–75 (MDTNNNIEKE…EILSQNKVGM (75 aa)) are domain I, interacts with DnaA modulators. The domain II stretch occupies residues 75 to 106 (MHLAHSVDVRIEVAPKIQISAQPNINYKAVKT). Positions 107–321 (SVKDSYTFEN…GAIIKISVNA (215 aa)) are domain III, AAA+ region. 4 residues coordinate ATP: glycine 151, glycine 153, lysine 154, and threonine 155. A domain IV, binds dsDNA region spans residues 322–455 (NLMNAPIDLN…DKKTAFHSSE (134 aa)).

Belongs to the DnaA family. As to quaternary structure, oligomerizes as a right-handed, spiral filament on DNA at oriC.

It is found in the cytoplasm. Plays an essential role in the initiation and regulation of chromosomal replication. ATP-DnaA binds to the origin of replication (oriC) to initiate formation of the DNA replication initiation complex once per cell cycle. Binds the DnaA box (a 9 base pair repeat at the origin) and separates the double-stranded (ds)DNA. Forms a right-handed helical filament on oriC DNA; dsDNA binds to the exterior of the filament while single-stranded (ss)DNA is stabiized in the filament's interior. The ATP-DnaA-oriC complex binds and stabilizes one strand of the AT-rich DNA unwinding element (DUE), permitting loading of DNA polymerase. After initiation quickly degrades to an ADP-DnaA complex that is not apt for DNA replication. Binds acidic phospholipids. This chain is Chromosomal replication initiator protein DnaA, found in Helicobacter pylori (strain Shi470).